Reading from the N-terminus, the 95-residue chain is MREYDIIRRPINTEKTNLQKETDNQITFEVARDANRVDIKNAIEKIFNTRVQAVKTMQVKGKVKQRGRIVGKRRNWKKAIVKLMPGQRIDFFEGV.

Belongs to the universal ribosomal protein uL23 family. As to quaternary structure, part of the 50S ribosomal subunit. Contacts protein L29, and trigger factor when it is bound to the ribosome.

Its function is as follows. One of the early assembly proteins it binds 23S rRNA. One of the proteins that surrounds the polypeptide exit tunnel on the outside of the ribosome. Forms the main docking site for trigger factor binding to the ribosome. This is Large ribosomal subunit protein uL23 from Desulforapulum autotrophicum (strain ATCC 43914 / DSM 3382 / VKM B-1955 / HRM2) (Desulfobacterium autotrophicum).